Consider the following 108-residue polypeptide: Thiosulfate sulfurtransferase GlpE (108 aa).

A Rhodanese domain is found at 17 to 105 (HQGAAVLVDI…WHRHFPADVA (89 aa)). Cys65 acts as the Cysteine persulfide intermediate in catalysis.

Belongs to the GlpE family.

Its subcellular location is the cytoplasm. It carries out the reaction thiosulfate + hydrogen cyanide = thiocyanate + sulfite + 2 H(+). The enzyme catalyses thiosulfate + [thioredoxin]-dithiol = [thioredoxin]-disulfide + hydrogen sulfide + sulfite + 2 H(+). Transferase that catalyzes the transfer of sulfur from thiosulfate to thiophilic acceptors such as cyanide or dithiols. May function in a CysM-independent thiosulfate assimilation pathway by catalyzing the conversion of thiosulfate to sulfite, which can then be used for L-cysteine biosynthesis. The protein is Thiosulfate sulfurtransferase GlpE of Salmonella arizonae (strain ATCC BAA-731 / CDC346-86 / RSK2980).